The sequence spans 596 residues: Aspartate--tRNA(Asp/Asn) ligase (596 aa).

Residue E175 coordinates L-aspartate. The tract at residues 199–202 (QQYK) is aspartate. 2 residues coordinate L-aspartate: R221 and H454. ATP is bound at residue 221–223 (RDE). An ATP-binding site is contributed by E488. R495 contributes to the L-aspartate binding site. 540–543 (GIDR) provides a ligand contact to ATP.

Belongs to the class-II aminoacyl-tRNA synthetase family. Type 1 subfamily. In terms of assembly, homodimer.

The protein localises to the cytoplasm. It catalyses the reaction tRNA(Asx) + L-aspartate + ATP = L-aspartyl-tRNA(Asx) + AMP + diphosphate. Aspartyl-tRNA synthetase with relaxed tRNA specificity since it is able to aspartylate not only its cognate tRNA(Asp) but also tRNA(Asn). Reaction proceeds in two steps: L-aspartate is first activated by ATP to form Asp-AMP and then transferred to the acceptor end of tRNA(Asp/Asn). The polypeptide is Aspartate--tRNA(Asp/Asn) ligase (Rhizobium johnstonii (strain DSM 114642 / LMG 32736 / 3841) (Rhizobium leguminosarum bv. viciae)).